Consider the following 220-residue polypeptide: Tumor protein D54 (220 aa).

Residue methionine 1 is modified to N-acetylmethionine. Residues serine 3, serine 12, and serine 19 each carry the phosphoserine modification. Positions 40–82 (GLTEGEEEELRAELAKVEEEIVTLRQVLAAKERHCGELKRRLG) form a coiled coil. 4 positions are modified to phosphoserine: serine 96, serine 149, serine 168, and serine 175. Threonine 177 carries the phosphothreonine modification. At serine 180 the chain carries Phosphoserine. Threonine 187 bears the Phosphothreonine mark. The segment at 189-220 (KSKVVGGRENGSDNLPPSPGSGDQTLPDHAPF) is disordered. Phosphoserine is present on residues serine 206 and serine 209.

It belongs to the TPD52 family. In terms of assembly, forms a homodimer or heterodimer with other members of the family. Interacts with MAL2.

The polypeptide is Tumor protein D54 (Tpd52l2) (Mus musculus (Mouse)).